Consider the following 396-residue polypeptide: Elongation factor Tu (396 aa).

The tr-type G domain occupies 10–206; sequence KPHCNIGTIG…AVDAYIPQPE (197 aa). Positions 19–26 are G1; that stretch reads GHVDHGKT. Position 19–26 (19–26) interacts with GTP; sequence GHVDHGKT. Threonine 26 provides a ligand contact to Mg(2+). The G2 stretch occupies residues 60–64; it reads GITIS. The interval 81 to 84 is G3; that stretch reads DCPG. Residues 81–85 and 136–139 each bind GTP; these read DCPGH and NKCD. A G4 region spans residues 136 to 139; it reads NKCD. Residues 174-176 are G5; that stretch reads SAL.

This sequence belongs to the TRAFAC class translation factor GTPase superfamily. Classic translation factor GTPase family. EF-Tu/EF-1A subfamily. In terms of assembly, monomer.

Its subcellular location is the cytoplasm. The enzyme catalyses GTP + H2O = GDP + phosphate + H(+). GTP hydrolase that promotes the GTP-dependent binding of aminoacyl-tRNA to the A-site of ribosomes during protein biosynthesis. The sequence is that of Elongation factor Tu from Rhodopseudomonas palustris (strain HaA2).